We begin with the raw amino-acid sequence, 354 residues long: MIDRLEKIQEKYLRISEELNSAKDPSSLKSLYKERSRLTPLYLKVEEYLKIYKDKKDAEELIPSEKDEEMHSMLKEEIRRASKKLEELEKELEILLLTPDPNSGKNILVEIRAGTGGEEAGLFVADLFRMYSKFADKQKIKSEIIDSAPTGIGGLKEIIFALEDERAYDLFKFEGGTHRVQRIPSTESGGRIHTSAVTVAVLPEADEEEIEINENDLRIDVYRSSGAGGQHVNTTDSAVRITHIPTGVVVACQDEKSQHKNKAKALRILSARILEKQTEDKKQASDAIKKQMIGSGDRSERVRTYNFPQGRCTDHRIGFTSHNLSAIMEGDLEELIGALTEEDRARKISETQVH.

Q230 carries the post-translational modification N5-methylglutamine. The interval 282-301 (KQASDAIKKQMIGSGDRSER) is disordered.

Belongs to the prokaryotic/mitochondrial release factor family. Methylated by PrmC. Methylation increases the termination efficiency of RF1.

The protein localises to the cytoplasm. Peptide chain release factor 1 directs the termination of translation in response to the peptide chain termination codons UAG and UAA. This Leptospira borgpetersenii serovar Hardjo-bovis (strain L550) protein is Peptide chain release factor 1.